We begin with the raw amino-acid sequence, 87 residues long: Tan_10cys (87 aa).

Residues 1-21 (MNLKVLFLLAMVLVTLCLGED) form the signal peptide. Positions 22–27 (RVTDRR) are excised as a propeptide.

This sequence belongs to the teretoxin C (TC) superfamily. Contains 5 disulfide bonds. As to expression, expressed by the venom duct.

The protein resides in the secreted. The chain is Tan_10cys from Terebra anilis (Auger snail).